The primary structure comprises 245 residues: Ribosomal RNA large subunit methyltransferase E (245 aa).

The interval 1 to 26 (MTKPPVGSNRSGRKLGQKVKKGKLKA) is disordered. Residues 11 to 26 (SGRKLGQKVKKGKLKA) are compositionally biased toward basic residues. 5 residues coordinate S-adenosyl-L-methionine: glycine 81, tryptophan 83, aspartate 104, aspartate 120, and aspartate 144. The active-site Proton acceptor is the lysine 184.

It belongs to the class I-like SAM-binding methyltransferase superfamily. RNA methyltransferase RlmE family.

Its subcellular location is the cytoplasm. It catalyses the reaction uridine(2552) in 23S rRNA + S-adenosyl-L-methionine = 2'-O-methyluridine(2552) in 23S rRNA + S-adenosyl-L-homocysteine + H(+). Functionally, specifically methylates the uridine in position 2552 of 23S rRNA at the 2'-O position of the ribose in the fully assembled 50S ribosomal subunit. This is Ribosomal RNA large subunit methyltransferase E from Sinorhizobium medicae (strain WSM419) (Ensifer medicae).